Reading from the N-terminus, the 597-residue chain is Translation initiation factor IF-2 (597 aa).

Low complexity-rich tracts occupy residues 57–73 and 81–95; these read GGDA…AATA and TPAA…PASD. Residues 57-96 form a disordered region; that stretch reads GGDAAPAAASAPAAATAEPEEADETPAAAAQADAEPASDL. The 174-residue stretch at 98–271 folds into the tr-type G domain; it reads HRAPVVTIMG…ELEDLRADPK (174 aa). A G1 region spans residues 107–114; it reads GHVDHGKT. 107–114 is a GTP binding site; sequence GHVDHGKT. The tract at residues 132 to 136 is G2; sequence GITQH. The tract at residues 153–156 is G3; the sequence is DTPG. Residues 153–157 and 207–210 each bind GTP; these read DTPGH and NKVD. Residues 207-210 form a G4 region; it reads NKVD. A G5 region spans residues 243-245; sequence SAK.

Belongs to the TRAFAC class translation factor GTPase superfamily. Classic translation factor GTPase family. IF-2 subfamily.

The protein resides in the cytoplasm. Its function is as follows. One of the essential components for the initiation of protein synthesis. Protects formylmethionyl-tRNA from spontaneous hydrolysis and promotes its binding to the 30S ribosomal subunits. Also involved in the hydrolysis of GTP during the formation of the 70S ribosomal complex. This chain is Translation initiation factor IF-2, found in Deinococcus radiodurans (strain ATCC 13939 / DSM 20539 / JCM 16871 / CCUG 27074 / LMG 4051 / NBRC 15346 / NCIMB 9279 / VKM B-1422 / R1).